The chain runs to 564 residues: MDEKQLVSQALSAAIDGVLGVEQIAAIIEKPKSSDLGDLAFPAFQLAKTLRKSPQIIAGEIAEKIDTKGFEKVIAVGPYVNFFLDKNATASEVIREVLAEGEHYGDANIGEGGNVPIDMSAPNIAKPFSIGHLRSTVIGDSIAKIYEKLGYQPIKINHLGDWGKQFGLLITAYKKYGDEATITANPIDELLKLYVKINAEAKEDSEVDEEGRQWFLKMEQGDEEALRIWKWFSDVSLIEFNRIYGKLGVTFDHFMGESFYSDKMDAIVEDLENKNLLHESKGALIVDLEKYNLNPALIKKTDGATLYITRDLATAAYRKKTFNFVKSLYVVGGEQTNHFKQLKAVLKEAGYDWSDDMVHVPFGMVTQGGKKFSTRKGHVVKLEMALDEAVDRAEKQIEAKNPNLENKEEVAKQVGVGAVKFYDLKTDRNNGYDFDLDEMVSFEGETGPYVQYAHARIQSILRKANRKVNIDNISLVVSDAEAWEIVKALKEFPNIVKRAADNYEPSIIAKYAISLAQAFNKYYAHVRILEDDAQLDGRLALISATSIVLKEALRLLGVAAPENM.

The short motif at 122-132 (PNIAKPFSIGH) is the 'HIGH' region element.

This sequence belongs to the class-I aminoacyl-tRNA synthetase family. As to quaternary structure, monomer.

Its subcellular location is the cytoplasm. It carries out the reaction tRNA(Arg) + L-arginine + ATP = L-arginyl-tRNA(Arg) + AMP + diphosphate. In Lactococcus lactis subsp. cremoris (strain MG1363), this protein is Arginine--tRNA ligase.